The sequence spans 322 residues: Tetraacyldisaccharide 4'-kinase (322 aa).

54 to 61 provides a ligand contact to ATP; that stretch reads SVGGTGKT.

It belongs to the LpxK family.

It catalyses the reaction a lipid A disaccharide + ATP = a lipid IVA + ADP + H(+). It functions in the pathway glycolipid biosynthesis; lipid IV(A) biosynthesis; lipid IV(A) from (3R)-3-hydroxytetradecanoyl-[acyl-carrier-protein] and UDP-N-acetyl-alpha-D-glucosamine: step 6/6. Functionally, transfers the gamma-phosphate of ATP to the 4'-position of a tetraacyldisaccharide 1-phosphate intermediate (termed DS-1-P) to form tetraacyldisaccharide 1,4'-bis-phosphate (lipid IVA). The sequence is that of Tetraacyldisaccharide 4'-kinase from Francisella tularensis subsp. holarctica (strain FTNF002-00 / FTA).